Reading from the N-terminus, the 121-residue chain is MEQARDHLHLRWTTEQHMPEVEVQVKYRTAALSNQECQLYLRHSQQQQVLVVDFQAKLRQVFITETPRCGKKPYWNNEEAESKQNPGSIYCLLLLIRGGMSDSLIKREISNFEIVSKNKKN.

This sequence belongs to the SNURF family.

The polypeptide is Putative SNURF-like protein (SNURFL) (Homo sapiens (Human)).